The chain runs to 94 residues: Co-chaperonin GroES (94 aa).

The protein belongs to the GroES chaperonin family. Heptamer of 7 subunits arranged in a ring. Interacts with the chaperonin GroEL.

Its subcellular location is the cytoplasm. Together with the chaperonin GroEL, plays an essential role in assisting protein folding. The GroEL-GroES system forms a nano-cage that allows encapsulation of the non-native substrate proteins and provides a physical environment optimized to promote and accelerate protein folding. GroES binds to the apical surface of the GroEL ring, thereby capping the opening of the GroEL channel. The polypeptide is Co-chaperonin GroES (Streptococcus pneumoniae (strain 70585)).